A 338-amino-acid polypeptide reads, in one-letter code: Ketol-acid reductoisomerase (NADP(+)) (338 aa).

Positions 2–182 (TKMYYEKDTD…GGARAGVLET (181 aa)) constitute a KARI N-terminal Rossmann domain. NADP(+) contacts are provided by residues 25–28 (YGSQ), S51, S53, and 83–86 (DELQ). H108 is a catalytic residue. Position 134 (G134) interacts with NADP(+). The KARI C-terminal knotted domain maps to 183 to 330 (TFRTETETDL…SEIRKLYCWN (148 aa)). 4 residues coordinate Mg(2+): D191, E195, E227, and E231. Substrate is bound at residue S252.

Belongs to the ketol-acid reductoisomerase family. Mg(2+) is required as a cofactor.

The enzyme catalyses (2R)-2,3-dihydroxy-3-methylbutanoate + NADP(+) = (2S)-2-acetolactate + NADPH + H(+). The catalysed reaction is (2R,3R)-2,3-dihydroxy-3-methylpentanoate + NADP(+) = (S)-2-ethyl-2-hydroxy-3-oxobutanoate + NADPH + H(+). Its pathway is amino-acid biosynthesis; L-isoleucine biosynthesis; L-isoleucine from 2-oxobutanoate: step 2/4. It participates in amino-acid biosynthesis; L-valine biosynthesis; L-valine from pyruvate: step 2/4. In terms of biological role, involved in the biosynthesis of branched-chain amino acids (BCAA). Catalyzes an alkyl-migration followed by a ketol-acid reduction of (S)-2-acetolactate (S2AL) to yield (R)-2,3-dihydroxy-isovalerate. In the isomerase reaction, S2AL is rearranged via a Mg-dependent methyl migration to produce 3-hydroxy-3-methyl-2-ketobutyrate (HMKB). In the reductase reaction, this 2-ketoacid undergoes a metal-dependent reduction by NADPH to yield (R)-2,3-dihydroxy-isovalerate. This chain is Ketol-acid reductoisomerase (NADP(+)), found in Clostridium botulinum (strain Alaska E43 / Type E3).